We begin with the raw amino-acid sequence, 305 residues long: Putative S-adenosyl-L-methionine-dependent methyltransferase Mvan_1344 (305 aa).

Residues Asp-130 and 159 to 160 (DL) contribute to the S-adenosyl-L-methionine site.

This sequence belongs to the UPF0677 family.

In terms of biological role, exhibits S-adenosyl-L-methionine-dependent methyltransferase activity. This Mycolicibacterium vanbaalenii (strain DSM 7251 / JCM 13017 / BCRC 16820 / KCTC 9966 / NRRL B-24157 / PYR-1) (Mycobacterium vanbaalenii) protein is Putative S-adenosyl-L-methionine-dependent methyltransferase Mvan_1344.